We begin with the raw amino-acid sequence, 550 residues long: Phospholipase B-like 1 (550 aa).

Positions 1–39 (MCHRSHGRSLRPPSPLLLLLPLLLQSPWAAGAAEKHNSA) are cleaved as a signal peptide. Asn-72 carries N-linked (GlcNAc...) (high mannose) asparagine; alternate glycosylation. Residue Asn-72 is glycosylated (N-linked (GlcNAc...) (hybrid) asparagine; alternate). A propeptide spans 210–228 (LSPTKSSSLKKFKIWEMGH) (removed in mature form). Asn-309 and Asn-412 each carry an N-linked (GlcNAc...) (high mannose) asparagine; alternate glycan. Asn-309 and Asn-412 each carry an N-linked (GlcNAc...) (hybrid) asparagine; alternate glycan. 2 disulfide bridges follow: Cys-471/Cys-476 and Cys-475/Cys-490. Residue Asn-527 is glycosylated (N-linked (GlcNAc...) (high mannose) asparagine; alternate). Residue Asn-527 is glycosylated (N-linked (GlcNAc...) (hybrid) asparagine; alternate).

The protein belongs to the phospholipase B-like family. In terms of assembly, may form a homodimer, each monomer is composed of a chain A and a chain B. Post-translationally, the maturation cleavages that produces chains A and B are required to open the putative substrate binding pocket. Both chains A and B remain associated in the mature protein.

The protein resides in the lysosome. Exhibits weak phospholipase activity, acting on various phospholipids, including phosphatidylcholine, phosphatidylinositol, phosphatidylethanolamine and lysophospholipids. However, in view of the small size of the putative binding pocket, it has been proposed that it may act rather as an amidase or a peptidase. This is Phospholipase B-like 1 (Plbd1) from Rattus norvegicus (Rat).